A 471-amino-acid chain; its full sequence is Adenosylhomocysteinase (471 aa).

Substrate-binding residues include T60, D135, and E196. 197–199 (TTT) is a binding site for NAD(+). K226 and D230 together coordinate substrate. Residues N231, 260-265 (GYGDVG), E283, N318, 339-341 (IGH), and N387 contribute to the NAD(+) site.

It belongs to the adenosylhomocysteinase family. Requires NAD(+) as cofactor.

The protein localises to the cytoplasm. It catalyses the reaction S-adenosyl-L-homocysteine + H2O = L-homocysteine + adenosine. It functions in the pathway amino-acid biosynthesis; L-homocysteine biosynthesis; L-homocysteine from S-adenosyl-L-homocysteine: step 1/1. Its function is as follows. May play a key role in the regulation of the intracellular concentration of adenosylhomocysteine. This is Adenosylhomocysteinase from Pelodictyon phaeoclathratiforme (strain DSM 5477 / BU-1).